Reading from the N-terminus, the 1088-residue chain is MEEISDPKPNALEQVLPTVPNGKCTAPVQMESLAVDVQKVSGEAKVRICSCWCEIVRSPEDLTKLVPCNDFAEDIKLFDSDPMQQEAESSIGIPLIPKQVTMSHNHDHESGSEMVSNEVMQENHVIATENTYQKSDFDRINMGQKETMPEEVIHKSFLESSTSSIDILLNNHNSYQSGLPPENAVTDCKQVQLGHRSDDAIKNSGLVELVIGQKNVAKSPSQLVETGKRGRGRPRKVQTGLEQLVIGQKTAAKSSSQLGDTGKRSRGRPRKVQNSPTSFLENINMEQKETIPEQVTQNSILESLTIPTDNQSRTYNSDQSELPPENAAKNCNHAQFGHQSDDTTKISGFKELVIGQETVAKSPSQLVDAGKRGRGRPRKVQTGLEQLVPVQETAAKSSSQLGDTGKRSRGRPRKVQDSPTSLGGNVKVVPEKGKDSQELSVNSSRSLRSRSQEKSIEPDVNNIVADEGADREKPRKKRKKRMEENRVDEFCRIRTHLRYLLHRIKYEKNFLDAYSGEGWKGQSLDKIKPEKELKRAKAEIFGRKLKIRDLFQRLDLARSEGRLPEILFDSRGEIDSEDIFCAKCGSKDVTLSNDIILCDGACDRGFHQFCLDPPLLKEYIPPDDEGWLCPGCECKIDCIKLLNDSQETNILLGDSWEKVFAEEAAAAASGKNLDDNSGLPSDDSEDDDYDPGGPDLDEKVQGDDSSTDESDYQSESDDMQVIRQKNSRGLPSDDSEDDEYDPSGLVTDQMYKDSSCSDFTSDSEDFTGVFDDYKDTGKAQGPLASTPDHVRNNEEGCGHPEQGDTAPLYPRRQVESLDYKKLNDIEFSKMCDILDILSSQLDVIICTGNQEEYGNTSSDSSDEDYMVTSSPDKNNSDKEATAMERGRESGDLELDQKARESTHNRRYIKKFAVEGTDSFLSRSCEDSAAPVAGSKSTSKTLHGEHATQRLLQSFKENQYPQRAVKESLAAELALSVRQVSNWFNNRRWSFRHSSRIGSDVAKFDSNDTPRQKSIDMSGPSLKSVLDSATYSEIEKKEQDTASLGLTEGCDRYMTLNMVADEGNVHTPCIAETREEKTEVGIKPQQNPL.

8 consecutive repeat copies span residues 140–152 (INMG…PEEV), 173–199 (NSYQ…RSDD), 205–239 (GLVE…KVQT), 240–274 (GLEQ…KVQN), 283–295 (INME…PEQV), 316–342 (NSDQ…QSDD), 348–382 (GFKE…KVQT), and 383–417 (GLEQ…KVQD). Positions 140 to 295 (INMGQKETMP…EQKETIPEQV (156 aa)) are 2 X 13 AA repeats. The segment at 173–342 (NSYQSGLPPE…HAQFGHQSDD (170 aa)) is 2 X 27 AA approximate repeats. Residues 205–274 (GLVELVIGQK…SRGRPRKVQN (70 aa)) form a 2 X 35 AA approximate tandem repeats (type C) region. The disordered stretch occupies residues 220–282 (PSQLVETGKR…QNSPTSFLEN (63 aa)). 2 DNA-binding regions (a.T hook) span residues 226–236 (TGKRGRGRPRK) and 261–271 (TGKRSRGRPRK). Residues 272-282 (VQNSPTSFLEN) are compositionally biased toward polar residues. Residues 303–320 (SLTIPTDNQSRTYNSDQS) show a composition bias toward polar residues. 2 disordered regions span residues 303–343 (SLTI…SDDT) and 363–484 (PSQL…RMEE). The tract at residues 348–417 (GFKELVIGQE…SRGRPRKVQD (70 aa)) is 2 X 35 AA approximate tandem repeats (type C). 2 consecutive DNA-binding regions (a.T hook) follow at residues 369–379 (AGKRGRGRPRK) and 404–414 (TGKRSRGRPRK). A PHD-type zinc finger spans residues 578 to 635 (DIFCAKCGSKDVTLSNDIILCDGACDRGFHQFCLDPPLLKEYIPPDDEGWLCPGCECK). Disordered stretches follow at residues 667–810 (AASG…PLYP) and 851–901 (EEYG…ARES). A 4-1 repeat occupies 678–693 (GLPSDDSEDDDYDPGG). Residues 678–744 (GLPSDDSEDD…SEDDEYDPSG (67 aa)) are 2 X 16 AA Asp/Glu-rich (acidic) repeats. Acidic residues predominate over residues 705 to 718 (SSTDESDYQSESDD). The 4-2 repeat unit spans residues 729 to 744 (GLPSDDSEDDEYDPSG). Composition is skewed to basic and acidic residues over residues 788 to 802 (DHVR…HPEQ) and 874 to 901 (NNSD…ARES). Positions 935–994 (KSTSKTLHGEHATQRLLQSFKENQYPQRAVKESLAAELALSVRQVSNWFNNRRWSFRHSS) form a DNA-binding region, homeobox.

This sequence belongs to the PHD-associated homeobox family.

It localises to the nucleus. Its function is as follows. Specifically binds to the fungal elicitor-responsive DNA element, 5'-CTAATTGTTTA-3', of the gene PR2 promoter. This Petroselinum crispum (Parsley) protein is Pathogenesis-related homeodomain protein (PRH).